The following is a 271-amino-acid chain: Formamidopyrimidine-DNA glycosylase (271 aa).

P2 acts as the Schiff-base intermediate with DNA in catalysis. E3 (proton donor) is an active-site residue. K58 (proton donor; for beta-elimination activity) is an active-site residue. DNA-binding residues include H91, R110, and R152. The segment at 237–271 (WVYGRTGQPCRKCGALVSKTRQGQRSSFFCAQCQK) adopts an FPG-type zinc-finger fold. The active-site Proton donor; for delta-elimination activity is the R261.

It belongs to the FPG family. As to quaternary structure, monomer. Zn(2+) serves as cofactor.

The catalysed reaction is Hydrolysis of DNA containing ring-opened 7-methylguanine residues, releasing 2,6-diamino-4-hydroxy-5-(N-methyl)formamidopyrimidine.. It catalyses the reaction 2'-deoxyribonucleotide-(2'-deoxyribose 5'-phosphate)-2'-deoxyribonucleotide-DNA = a 3'-end 2'-deoxyribonucleotide-(2,3-dehydro-2,3-deoxyribose 5'-phosphate)-DNA + a 5'-end 5'-phospho-2'-deoxyribonucleoside-DNA + H(+). In terms of biological role, involved in base excision repair of DNA damaged by oxidation or by mutagenic agents. Acts as a DNA glycosylase that recognizes and removes damaged bases. Has a preference for oxidized purines, such as 7,8-dihydro-8-oxoguanine (8-oxoG). Has AP (apurinic/apyrimidinic) lyase activity and introduces nicks in the DNA strand. Cleaves the DNA backbone by beta-delta elimination to generate a single-strand break at the site of the removed base with both 3'- and 5'-phosphates. This Nitrosomonas eutropha (strain DSM 101675 / C91 / Nm57) protein is Formamidopyrimidine-DNA glycosylase.